Reading from the N-terminus, the 371-residue chain is Queuine tRNA-ribosyltransferase (371 aa).

The active-site Proton acceptor is the aspartate 90. Residues 90-94 (DSGGF), aspartate 144, glutamine 188, and glycine 215 contribute to the substrate site. The RNA binding stretch occupies residues 246–252 (GVGTPED). Residue aspartate 265 is the Nucleophile of the active site. The tract at residues 270-274 (TRNAR) is RNA binding; important for wobble base 34 recognition. Cysteine 303, cysteine 305, cysteine 308, and histidine 334 together coordinate Zn(2+).

The protein belongs to the queuine tRNA-ribosyltransferase family. In terms of assembly, homodimer. Within each dimer, one monomer is responsible for RNA recognition and catalysis, while the other monomer binds to the replacement base PreQ1. The cofactor is Zn(2+).

It carries out the reaction 7-aminomethyl-7-carbaguanine + guanosine(34) in tRNA = 7-aminomethyl-7-carbaguanosine(34) in tRNA + guanine. The protein operates within tRNA modification; tRNA-queuosine biosynthesis. In terms of biological role, catalyzes the base-exchange of a guanine (G) residue with the queuine precursor 7-aminomethyl-7-deazaguanine (PreQ1) at position 34 (anticodon wobble position) in tRNAs with GU(N) anticodons (tRNA-Asp, -Asn, -His and -Tyr). Catalysis occurs through a double-displacement mechanism. The nucleophile active site attacks the C1' of nucleotide 34 to detach the guanine base from the RNA, forming a covalent enzyme-RNA intermediate. The proton acceptor active site deprotonates the incoming PreQ1, allowing a nucleophilic attack on the C1' of the ribose to form the product. After dissociation, two additional enzymatic reactions on the tRNA convert PreQ1 to queuine (Q), resulting in the hypermodified nucleoside queuosine (7-(((4,5-cis-dihydroxy-2-cyclopenten-1-yl)amino)methyl)-7-deazaguanosine). The polypeptide is Queuine tRNA-ribosyltransferase (Neisseria meningitidis serogroup C (strain 053442)).